Here is a 325-residue protein sequence, read N- to C-terminus: Intelectin-2 (325 aa).

The signal sequence occupies residues 1 to 26; sequence MLSMLRTMTRLCFLLFFSVATSGCSA. In terms of domain architecture, Fibrinogen C-terminal spans 44 to 267; it reads FSFSSLPRSC…AANALCAGIK (224 aa). C53 and C82 are oxidised to a cystine. 7 residues coordinate Ca(2+): H98, E99, D101, G104, G109, D110, and D145. Cystine bridges form between C106/C292, C211/C271, and C263/C277. Ca(2+) contacts are provided by N272, E274, and D294. A carbohydrate is bound at residue 274–275; that stretch reads EH.

Expressed only in the small intestine.

Its subcellular location is the secreted. In terms of biological role, may play a role in the defense system against pathogens. This chain is Intelectin-2 (ITLN2), found in Homo sapiens (Human).